Reading from the N-terminus, the 137-residue chain is Small ribosomal subunit protein uS12 (137 aa).

Residues 1–57 (MPTINQLVRKPRKSKVKKSKSPALNVGYNSRKKVQTNVSSPQKRGVATRVGTMTPKK) are disordered. A compositionally biased stretch (basic residues) spans 9-20 (RKPRKSKVKKSK). Position 102 is a 3-methylthioaspartic acid (aspartate 102).

The protein belongs to the universal ribosomal protein uS12 family. In terms of assembly, part of the 30S ribosomal subunit. Contacts proteins S8 and S17. May interact with IF1 in the 30S initiation complex.

Its function is as follows. With S4 and S5 plays an important role in translational accuracy. Functionally, interacts with and stabilizes bases of the 16S rRNA that are involved in tRNA selection in the A site and with the mRNA backbone. Located at the interface of the 30S and 50S subunits, it traverses the body of the 30S subunit contacting proteins on the other side and probably holding the rRNA structure together. The combined cluster of proteins S8, S12 and S17 appears to hold together the shoulder and platform of the 30S subunit. The polypeptide is Small ribosomal subunit protein uS12 (Streptococcus suis (strain 05ZYH33)).